The primary structure comprises 599 residues: Cytadherence high molecular weight protein 3 (599 aa).

Over residues 220–236 the composition is skewed to polar residues; sequence VQVDSGSQNHSFNNSPS. The tract at residues 220-241 is disordered; sequence VQVDSGSQNHSFNNSPSLKPPL.

It is found in the cell projection. It localises to the attachment organelle membrane. In terms of biological role, component of the cytoskeleton-like structure which stabilizes the shape of the wall-less mycoplasma. This cytoskeleton-like network of accessory proteins containing HMW proteins 1 to 5 allows the proper anchoring of cytadhesin proteins in the mycoplasmal membrane at the attachment organelle. Essential for successful surface parasitism. The polypeptide is Cytadherence high molecular weight protein 3 (hmw3) (Mycoplasma genitalium (strain ATCC 33530 / DSM 19775 / NCTC 10195 / G37) (Mycoplasmoides genitalium)).